Reading from the N-terminus, the 202-residue chain is Proteasome subunit beta 1 (202 aa).

M1 is a propeptide (removed in mature form; by autocatalysis). Catalysis depends on T2, which acts as the Nucleophile.

Belongs to the peptidase T1B family. In terms of assembly, the 20S proteasome core is composed of 14 alpha and 14 beta subunits that assemble into four stacked heptameric rings, resulting in a barrel-shaped structure. The two inner rings, each composed of seven catalytic beta subunits, are sandwiched by two outer rings, each composed of seven alpha subunits. The catalytic chamber with the active sites is on the inside of the barrel. Has a gated structure, the ends of the cylinder being occluded by the N-termini of the alpha-subunits. Is capped at one or both ends by the proteasome regulatory ATPase, PAN.

The protein localises to the cytoplasm. The catalysed reaction is Cleavage of peptide bonds with very broad specificity.. The formation of the proteasomal ATPase PAN-20S proteasome complex, via the docking of the C-termini of PAN into the intersubunit pockets in the alpha-rings, triggers opening of the gate for substrate entry. Interconversion between the open-gate and close-gate conformations leads to a dynamic regulation of the 20S proteasome proteolysis activity. Functionally, component of the proteasome core, a large protease complex with broad specificity involved in protein degradation. This Pyrobaculum aerophilum (strain ATCC 51768 / DSM 7523 / JCM 9630 / CIP 104966 / NBRC 100827 / IM2) protein is Proteasome subunit beta 1.